The primary structure comprises 249 residues: MSRTLPHLLSSDPASPFPPAEHALREPDGLLAIGGDLHPQRLLNAYAHGIFPWFSDGQPLLWWSPNPRTVFRTDAIHLSSRFRRQLRTCTWTLRADTAFAQVIAACALSPRPGQDGTWITDQMQEAYLDLHRRGYAHSVEVFDGARLVGGIYGVAIGQMFFGESMFSGASGGSKIALAALAAELHGLGWPLIDAQVENPHLMRLGAQRLQREQFLQHVATQVALPEPPGSWTQRYGERHASALAGVRLT.

Residues 1–21 (MSRTLPHLLSSDPASPFPPAE) are disordered.

Belongs to the L/F-transferase family.

The protein resides in the cytoplasm. It carries out the reaction N-terminal L-lysyl-[protein] + L-leucyl-tRNA(Leu) = N-terminal L-leucyl-L-lysyl-[protein] + tRNA(Leu) + H(+). The enzyme catalyses N-terminal L-arginyl-[protein] + L-leucyl-tRNA(Leu) = N-terminal L-leucyl-L-arginyl-[protein] + tRNA(Leu) + H(+). The catalysed reaction is L-phenylalanyl-tRNA(Phe) + an N-terminal L-alpha-aminoacyl-[protein] = an N-terminal L-phenylalanyl-L-alpha-aminoacyl-[protein] + tRNA(Phe). Functions in the N-end rule pathway of protein degradation where it conjugates Leu, Phe and, less efficiently, Met from aminoacyl-tRNAs to the N-termini of proteins containing an N-terminal arginine or lysine. This Xanthomonas campestris pv. campestris (strain 8004) protein is Leucyl/phenylalanyl-tRNA--protein transferase.